The sequence spans 864 residues: DNA mismatch repair protein MutS (864 aa).

Residue 621 to 628 (GPNMGGKS) coordinates ATP. The interval 804 to 833 (ETGKPESPAPVASRSSKPSMQADMFAEPQP) is disordered.

The protein belongs to the DNA mismatch repair MutS family.

Its function is as follows. This protein is involved in the repair of mismatches in DNA. It is possible that it carries out the mismatch recognition step. This protein has a weak ATPase activity. The protein is DNA mismatch repair protein MutS of Teredinibacter turnerae (strain ATCC 39867 / T7901).